A 401-amino-acid polypeptide reads, in one-letter code: Flagellin D (401 aa).

The protein belongs to the bacterial flagellin family.

It is found in the secreted. It localises to the bacterial flagellum. In terms of biological role, flagellin is the subunit protein which polymerizes to form the filaments of bacterial flagella. The sequence is that of Flagellin D (flaD) from Rhizobium meliloti (strain 1021) (Ensifer meliloti).